The following is a 356-amino-acid chain: 1-acyl-sn-glycerol-3-phosphate acyltransferase LPAT1, chloroplastic (356 aa).

Residues 1-56 constitute a chloroplast transit peptide; that stretch reads MDVASARSISSHPSYYGKPICSSQSSLIRISRDKVCCFGRISNGMTSFTTSLHAVP. A helical transmembrane segment spans residues 127–147; sequence GIFFCVVAGISATFLIVLMII. The HXXXXD motif signature appears at 202–207; that stretch reads HQSFLD. A helical transmembrane segment spans residues 224–244; that stretch reads TGIFVIPIIGWAMSMMGVVPL.

Belongs to the 1-acyl-sn-glycerol-3-phosphate acyltransferase family. Widely expressed. Expressed at higher level in leaves. Expressed at lower level in silique walls compared to leaves.

It localises to the plastid. It is found in the chloroplast membrane. The enzyme catalyses a fatty acyl-[ACP] + a 1-acyl-sn-glycero-3-phosphate = a 1,2-diacyl-sn-glycero-3-phosphate + holo-[ACP]. It carries out the reaction a 1-acyl-sn-glycero-3-phosphate + an acyl-CoA = a 1,2-diacyl-sn-glycero-3-phosphate + CoA. Its pathway is phospholipid metabolism; CDP-diacylglycerol biosynthesis; CDP-diacylglycerol from sn-glycerol 3-phosphate: step 2/3. Functionally, plastidial enzyme of the prokaryotic glycerol-3-phosphate pathway that converts lysophosphatidic acid (LPA) into phosphatidic acid by incorporating an acyl moiety at position sn-2. Utilizes palmitoyl-ACP (16:0-ACP) to produce phosphatidic acid containing a saturated group at position sn-2, which is characteristic of lipids synthesized by the prokaryotic pathway. In vitro, can use 16:0-CoA as acyl donor. Essential for embryo development during the transition from the globular to the heart stage when chloroplasts begin to form. The polypeptide is 1-acyl-sn-glycerol-3-phosphate acyltransferase LPAT1, chloroplastic (Arabidopsis thaliana (Mouse-ear cress)).